Here is a 250-residue protein sequence, read N- to C-terminus: 6-phosphogluconate dehydrogenase, decarboxylating (250 aa).

Substrate is bound by residues Lys29 and Arg56. Lys77 bears the N6-acetyllysine mark. Substrate-binding residues include Arg214 and His220. 245–248 (SSSY) provides a ligand contact to NADP(+).

It belongs to the 6-phosphogluconate dehydrogenase family. In terms of assembly, homodimer.

The protein resides in the cytoplasm. The enzyme catalyses 6-phospho-D-gluconate + NADP(+) = D-ribulose 5-phosphate + CO2 + NADPH. It participates in carbohydrate degradation; pentose phosphate pathway; D-ribulose 5-phosphate from D-glucose 6-phosphate (oxidative stage): step 3/3. Functionally, catalyzes the oxidative decarboxylation of 6-phosphogluconate to ribulose 5-phosphate and CO(2), with concomitant reduction of NADP to NADPH. This chain is 6-phosphogluconate dehydrogenase, decarboxylating (PGD), found in Sus scrofa (Pig).